Reading from the N-terminus, the 500-residue chain is tRNA modification GTPase MnmE (500 aa).

Positions 24, 120, and 159 each coordinate (6S)-5-formyl-5,6,7,8-tetrahydrofolate. A TrmE-type G domain is found at 256 to 420 (GIPVAIIGET…LEKKLVQAAA (165 aa)). Asn266 provides a ligand contact to K(+). GTP contacts are provided by residues 266–271 (NAGKST), 285–291 (SDIHGTT), and 310–313 (DTAG). Ser270 lines the Mg(2+) pocket. 3 residues coordinate K(+): Ser285, Ile287, and Thr290. Thr291 contributes to the Mg(2+) binding site. (6S)-5-formyl-5,6,7,8-tetrahydrofolate is bound at residue Lys500.

Belongs to the TRAFAC class TrmE-Era-EngA-EngB-Septin-like GTPase superfamily. TrmE GTPase family. In terms of assembly, homodimer. Heterotetramer of two MnmE and two MnmG subunits. K(+) is required as a cofactor.

It is found in the cytoplasm. Its function is as follows. Exhibits a very high intrinsic GTPase hydrolysis rate. Involved in the addition of a carboxymethylaminomethyl (cmnm) group at the wobble position (U34) of certain tRNAs, forming tRNA-cmnm(5)s(2)U34. The protein is tRNA modification GTPase MnmE of Phocaeicola vulgatus (strain ATCC 8482 / DSM 1447 / JCM 5826 / CCUG 4940 / NBRC 14291 / NCTC 11154) (Bacteroides vulgatus).